A 317-amino-acid polypeptide reads, in one-letter code: Beta-ketoacyl-[acyl-carrier-protein] synthase III (317 aa).

Residues Cys-112 and His-244 contribute to the active site. The segment at 245-249 (QANLR) is ACP-binding. Asn-274 is an active-site residue.

It belongs to the thiolase-like superfamily. FabH family. As to quaternary structure, homodimer.

The protein localises to the cytoplasm. It carries out the reaction malonyl-[ACP] + acetyl-CoA + H(+) = 3-oxobutanoyl-[ACP] + CO2 + CoA. Its pathway is lipid metabolism; fatty acid biosynthesis. In terms of biological role, catalyzes the condensation reaction of fatty acid synthesis by the addition to an acyl acceptor of two carbons from malonyl-ACP. Catalyzes the first condensation reaction which initiates fatty acid synthesis and may therefore play a role in governing the total rate of fatty acid production. Possesses both acetoacetyl-ACP synthase and acetyl transacylase activities. Its substrate specificity determines the biosynthesis of branched-chain and/or straight-chain of fatty acids. The polypeptide is Beta-ketoacyl-[acyl-carrier-protein] synthase III (Shigella boydii serotype 4 (strain Sb227)).